Here is a 65-residue protein sequence, read N- to C-terminus: UPF0434 protein RPD_0454 (65 aa).

Belongs to the UPF0434 family.

The protein is UPF0434 protein RPD_0454 of Rhodopseudomonas palustris (strain BisB5).